The following is a 24-amino-acid chain: Waglerin-3 (24 aa).

Over residues 1–10 (SLGGKPDLRP) the composition is skewed to basic and acidic residues. Positions 1 to 24 (SLGGKPDLRPCHPPCHYIPRPKPR) are disordered. The cysteines at positions 11 and 15 are disulfide-linked.

Belongs to the waglerin family. As to quaternary structure, waglerin-1 is monomeric. In terms of processing, amidation of the waglerin-1 C-terminus increases the affinity by 2-fold. As to expression, expressed by the venom gland.

Its subcellular location is the secreted. In terms of biological role, waglerin-1 selectively blocks the epsilon subunit of muscle nicotinic acetylcholine receptor (nAChR). Also has effects on rodent ionotropic GABA(A) receptors (GABR), since it potentiates I(GABA) in some neurons and depresses I(GABA) in others. In mice, it elicits tachypnea, ocular proptosis, rapid collapse and spasms, whereas no toxic effects on respiration and blood pressure are observed in rats. Waglerin-3 selectively blocks the epsilon subunit of muscle nicotinic acetylcholine receptor (nAChR). It elicits tachypnea, ocular proptosis, rapid collapse and spasms in mice. It causes death by respiratory failure. The sequence is that of Waglerin-3 from Tropidolaemus wagleri (Wagler's pit viper).